A 433-amino-acid chain; its full sequence is 3-phosphoshikimate 1-carboxyvinyltransferase (433 aa).

Residues lysine 15, serine 16, and arginine 20 each coordinate 3-phosphoshikimate. Lysine 15 contributes to the phosphoenolpyruvate binding site. Glycine 96 and arginine 124 together coordinate phosphoenolpyruvate. 3-phosphoshikimate is bound by residues serine 169, glutamine 171, aspartate 318, and lysine 345. Glutamine 171 lines the phosphoenolpyruvate pocket. The active-site Proton acceptor is the aspartate 318. Phosphoenolpyruvate-binding residues include arginine 349 and arginine 393.

The protein belongs to the EPSP synthase family. Monomer.

Its subcellular location is the cytoplasm. It catalyses the reaction 3-phosphoshikimate + phosphoenolpyruvate = 5-O-(1-carboxyvinyl)-3-phosphoshikimate + phosphate. It functions in the pathway metabolic intermediate biosynthesis; chorismate biosynthesis; chorismate from D-erythrose 4-phosphate and phosphoenolpyruvate: step 6/7. Catalyzes the transfer of the enolpyruvyl moiety of phosphoenolpyruvate (PEP) to the 5-hydroxyl of shikimate-3-phosphate (S3P) to produce enolpyruvyl shikimate-3-phosphate and inorganic phosphate. The protein is 3-phosphoshikimate 1-carboxyvinyltransferase of Chlorobium phaeovibrioides (strain DSM 265 / 1930) (Prosthecochloris vibrioformis (strain DSM 265)).